The following is a 414-amino-acid chain: tRNA N6-adenosine threonylcarbamoyltransferase, mitochondrial (414 aa).

The transit peptide at 1 to 29 (MLMLSKTAGAIPRPPRSNVRGFIRRFNVQ) directs the protein to the mitochondrion. Residues lysine 74 and lysine 140 each carry the N6-acetyllysine modification. Positions 147 and 151 each coordinate a divalent metal cation. Substrate-binding positions include 169-173 (LISGG) and aspartate 202. Position 203 is an N6-acetyllysine (lysine 203). Residues glycine 222 and glutamate 226 each coordinate substrate. 2 positions are modified to N6-acetyllysine: lysine 230 and lysine 299. Residues 329-330 (SN) and threonine 357 contribute to the substrate site. Aspartate 358 is a binding site for a divalent metal cation.

This sequence belongs to the KAE1 / TsaD family. In terms of assembly, monomer. It depends on a divalent metal cation as a cofactor.

The protein resides in the mitochondrion. The catalysed reaction is L-threonylcarbamoyladenylate + adenosine(37) in tRNA = N(6)-L-threonylcarbamoyladenosine(37) in tRNA + AMP + H(+). Functionally, required for the formation of a threonylcarbamoyl group on adenosine at position 37 (t(6)A37) in mitochondrial tRNAs that read codons beginning with adenine. Probably involved in the transfer of the threonylcarbamoyl moiety of threonylcarbamoyl-AMP (TC-AMP) to the N6 group of A37. Involved in mitochondrial genome maintenance. In Rattus norvegicus (Rat), this protein is tRNA N6-adenosine threonylcarbamoyltransferase, mitochondrial.